The following is a 398-amino-acid chain: Acetate kinase (398 aa).

Mg(2+) is bound at residue asparagine 8. Lysine 15 contributes to the ATP binding site. Arginine 92 serves as a coordination point for substrate. Aspartate 149 acts as the Proton donor/acceptor in catalysis. ATP-binding positions include 209-213, 283-285, and 331-335; these read HLGNG, DFR, and GVGEN. A Mg(2+)-binding site is contributed by glutamate 385.

This sequence belongs to the acetokinase family. In terms of assembly, homodimer. Requires Mg(2+) as cofactor. The cofactor is Mn(2+).

The protein resides in the cytoplasm. The enzyme catalyses acetate + ATP = acetyl phosphate + ADP. Its pathway is metabolic intermediate biosynthesis; acetyl-CoA biosynthesis; acetyl-CoA from acetate: step 1/2. In terms of biological role, catalyzes the formation of acetyl phosphate from acetate and ATP. Can also catalyze the reverse reaction. The protein is Acetate kinase of Corynebacterium efficiens (strain DSM 44549 / YS-314 / AJ 12310 / JCM 11189 / NBRC 100395).